A 292-amino-acid polypeptide reads, in one-letter code: Elongation factor Ts (292 aa).

The segment at 80-83 is involved in Mg(2+) ion dislocation from EF-Tu; that stretch reads TDFV.

The protein belongs to the EF-Ts family.

It is found in the cytoplasm. Its function is as follows. Associates with the EF-Tu.GDP complex and induces the exchange of GDP to GTP. It remains bound to the aminoacyl-tRNA.EF-Tu.GTP complex up to the GTP hydrolysis stage on the ribosome. This chain is Elongation factor Ts, found in Psychrobacter sp. (strain PRwf-1).